The chain runs to 471 residues: UDP-N-acetylmuramate--L-alanine ligase (471 aa).

114–120 (GTHGKTT) serves as a coordination point for ATP.

Belongs to the MurCDEF family.

Its subcellular location is the cytoplasm. It catalyses the reaction UDP-N-acetyl-alpha-D-muramate + L-alanine + ATP = UDP-N-acetyl-alpha-D-muramoyl-L-alanine + ADP + phosphate + H(+). Its pathway is cell wall biogenesis; peptidoglycan biosynthesis. Cell wall formation. The protein is UDP-N-acetylmuramate--L-alanine ligase of Methylobacterium sp. (strain 4-46).